The primary structure comprises 332 residues: GTP 3',8-cyclase (332 aa).

Residues glycine 9–arginine 220 enclose the Radical SAM core domain. Arginine 18 is a binding site for GTP. Residues cysteine 25 and cysteine 29 each contribute to the [4Fe-4S] cluster site. Tyrosine 31 contacts S-adenosyl-L-methionine. Position 32 (cysteine 32) interacts with [4Fe-4S] cluster. Arginine 67 contributes to the GTP binding site. Glycine 71 is a binding site for S-adenosyl-L-methionine. A GTP-binding site is contributed by threonine 98. Serine 122 provides a ligand contact to S-adenosyl-L-methionine. Position 159 (lysine 159) interacts with GTP. Methionine 193 lines the S-adenosyl-L-methionine pocket. Residues cysteine 258 and cysteine 261 each contribute to the [4Fe-4S] cluster site. GTP is bound at residue arginine 263–arginine 265. Cysteine 275 is a [4Fe-4S] cluster binding site.

It belongs to the radical SAM superfamily. MoaA family. In terms of assembly, monomer and homodimer. Requires [4Fe-4S] cluster as cofactor.

The enzyme catalyses GTP + AH2 + S-adenosyl-L-methionine = (8S)-3',8-cyclo-7,8-dihydroguanosine 5'-triphosphate + 5'-deoxyadenosine + L-methionine + A + H(+). It functions in the pathway cofactor biosynthesis; molybdopterin biosynthesis. Functionally, catalyzes the cyclization of GTP to (8S)-3',8-cyclo-7,8-dihydroguanosine 5'-triphosphate. This is GTP 3',8-cyclase from Pseudomonas fluorescens (strain Pf0-1).